The primary structure comprises 679 residues: Protein CASP (679 aa).

At 1-614 the chain is on the cytoplasmic side; the sequence is MDTSVYSHAL…VILQNKMTRM (614 aa). Coiled coils occupy residues 14 to 90 and 178 to 341; these read AKAD…EKVL and RNWK…NYSD. Ser364 is modified (phosphoserine). Residues 385-444 adopt a coiled-coil conformation; the sequence is ANKKLQATLAEYRSKSTAQEEERNELKKSVDQLKQQIATLKEANEKLETDLEKVENVSPH. Phosphoserine is present on residues Ser450 and Ser453. A coiled-coil region spans residues 492-540; that stretch reads IVTKQRDRFRSRNMDLEKQLRQGNSEKGKLKLEISKLKGDNTKLYERIR. Residue Ser555 is modified to Phosphoserine. Residues 615–635 form a helical; Anchor for type IV membrane protein membrane-spanning segment; sequence VFLFYCIGLHGLVFMMSMYVI. At 636–679 the chain is on the lumenal side; it reads NISGYMTPEVGIVQSAKSSSNLNGGLGGAEKVAAGVGSVHGINR.

It belongs to the CASP family.

The protein localises to the golgi apparatus membrane. In terms of biological role, may be involved in intra-Golgi transport. The polypeptide is Protein CASP (COY1) (Saccharomyces cerevisiae (strain ATCC 204508 / S288c) (Baker's yeast)).